Here is a 335-residue protein sequence, read N- to C-terminus: Succinylglutamate desuccinylase (335 aa).

The Zn(2+) site is built by His-59, Glu-62, and His-151. Glu-215 is an active-site residue.

This sequence belongs to the AspA/AstE family. Succinylglutamate desuccinylase subfamily. Zn(2+) is required as a cofactor.

It catalyses the reaction N-succinyl-L-glutamate + H2O = L-glutamate + succinate. Its pathway is amino-acid degradation; L-arginine degradation via AST pathway; L-glutamate and succinate from L-arginine: step 5/5. Transforms N(2)-succinylglutamate into succinate and glutamate. The chain is Succinylglutamate desuccinylase from Pseudomonas putida (strain ATCC 47054 / DSM 6125 / CFBP 8728 / NCIMB 11950 / KT2440).